Consider the following 322-residue polypeptide: Elongation factor P--(R)-beta-lysine ligase (322 aa).

75-77 lines the substrate pocket; it reads SPE. 99–101 contacts ATP; sequence RNE. Position 117 (Tyr117) interacts with substrate. Residue 241 to 242 participates in ATP binding; sequence EL. Glu248 lines the substrate pocket. Gly297 contributes to the ATP binding site.

Belongs to the class-II aminoacyl-tRNA synthetase family. EpmA subfamily. Homodimer.

The enzyme catalyses D-beta-lysine + L-lysyl-[protein] + ATP = N(6)-((3R)-3,6-diaminohexanoyl)-L-lysyl-[protein] + AMP + diphosphate + H(+). With EpmB is involved in the beta-lysylation step of the post-translational modification of translation elongation factor P (EF-P). Catalyzes the ATP-dependent activation of (R)-beta-lysine produced by EpmB, forming a lysyl-adenylate, from which the beta-lysyl moiety is then transferred to the epsilon-amino group of a conserved specific lysine residue in EF-P. In Avibacterium paragallinarum (Haemophilus gallinarum), this protein is Elongation factor P--(R)-beta-lysine ligase.